We begin with the raw amino-acid sequence, 242 residues long: Flavin prenyltransferase PAD1, mitochondrial (242 aa).

The N-terminal 58 residues, 1 to 58 (MLLFPRRTNIAFFKTTGIFANFPLLGRTITTSPSFLTHKLSKEVTRASTSPPRPKRIV), are a transit peptide targeting the mitochondrion. FMN-binding positions include 63–65 (GAT), Ser89, 140–143 (SMKS), and Arg175. Residues Tyr205 and Arg221 each contribute to the dimethylallyl phosphate site.

It belongs to the UbiX/PAD1 family. As to quaternary structure, oligomer.

It is found in the mitochondrion. It carries out the reaction dimethylallyl phosphate + FMNH2 = prenylated FMNH2 + phosphate. Flavin prenyltransferase that catalyzes the synthesis of the prenylated FMN cofactor (prenyl-FMN) for the ferulic acid decarboxylase FDC1/ubiD. The prenyltransferase is metal-independent and links a dimethylallyl moiety from dimethylallyl monophosphate (DMAP) to the flavin N5 and C6 atoms of FMN. Involved in the decarboxylation of phenylacrylic acids like ferulic acid, p-coumaric acid or cinnamic acid, producing the corresponding vinyl derivatives which play the role of aroma metabolites. Also involved in the degradation of the food preservative sorbic acid (2,4-hexadienoic acid) to a volatile hydrocarbon, 1,3-pentadiene. Not essential for ubiquinone synthesis. Can rescue Q biosynthesis in E.coli strains lacking UbiX. Has mRNA binding activity. This chain is Flavin prenyltransferase PAD1, mitochondrial, found in Saccharomyces cerevisiae (strain ATCC 204508 / S288c) (Baker's yeast).